We begin with the raw amino-acid sequence, 90 residues long: Small ribosomal subunit protein bS18A (90 aa).

It belongs to the bacterial ribosomal protein bS18 family. As to quaternary structure, part of the 30S ribosomal subunit. Forms a tight heterodimer with protein bS6.

Binds as a heterodimer with protein bS6 to the central domain of the 16S rRNA, where it helps stabilize the platform of the 30S subunit. This Roseiflexus castenholzii (strain DSM 13941 / HLO8) protein is Small ribosomal subunit protein bS18A.